Reading from the N-terminus, the 186-residue chain is Large ribosomal subunit protein uL5 (186 aa).

It belongs to the universal ribosomal protein uL5 family. In terms of assembly, part of the 50S ribosomal subunit; part of the 5S rRNA/L5/L18/L25 subcomplex. Contacts the 5S rRNA and the P site tRNA. Forms a bridge to the 30S subunit in the 70S ribosome.

Functionally, this is one of the proteins that bind and probably mediate the attachment of the 5S RNA into the large ribosomal subunit, where it forms part of the central protuberance. In the 70S ribosome it contacts protein S13 of the 30S subunit (bridge B1b), connecting the 2 subunits; this bridge is implicated in subunit movement. Contacts the P site tRNA; the 5S rRNA and some of its associated proteins might help stabilize positioning of ribosome-bound tRNAs. This Ruegeria pomeroyi (strain ATCC 700808 / DSM 15171 / DSS-3) (Silicibacter pomeroyi) protein is Large ribosomal subunit protein uL5.